The following is a 154-amino-acid chain: uncharacterized protein (154 aa).

4 helical membrane-spanning segments follow: residues 15–37 (DFSF…ALIT), 58–80 (FAAM…WLWG), 95–116 (LGAL…FAFT), and 123–145 (LVIS…FVPH).

It localises to the cell membrane. This is an uncharacterized protein from Archaeoglobus fulgidus (strain ATCC 49558 / DSM 4304 / JCM 9628 / NBRC 100126 / VC-16).